Reading from the N-terminus, the 483-residue chain is Glutamyl-tRNA(Gln) amidotransferase subunit A (483 aa).

Catalysis depends on charge relay system residues K75 and S150. The Acyl-ester intermediate role is filled by S174.

It belongs to the amidase family. GatA subfamily. As to quaternary structure, heterotrimer of A, B and C subunits.

It carries out the reaction L-glutamyl-tRNA(Gln) + L-glutamine + ATP + H2O = L-glutaminyl-tRNA(Gln) + L-glutamate + ADP + phosphate + H(+). Allows the formation of correctly charged Gln-tRNA(Gln) through the transamidation of misacylated Glu-tRNA(Gln) in organisms which lack glutaminyl-tRNA synthetase. The reaction takes place in the presence of glutamine and ATP through an activated gamma-phospho-Glu-tRNA(Gln). This Legionella pneumophila (strain Corby) protein is Glutamyl-tRNA(Gln) amidotransferase subunit A.